Here is a 297-residue protein sequence, read N- to C-terminus: HTH-type transcriptional regulator ArgP (297 aa).

The 57-residue stretch at 4–60 folds into the HTH lysR-type domain; that stretch reads PDYRTLQALDAVIRERGFERAAQKLCITQSAVSQRIKQLENMFGQPLLVRTVPPRPT. The segment at residues 21 to 40 is a DNA-binding region (H-T-H motif); it reads FERAAQKLCITQSAVSQRIK.

Belongs to the LysR transcriptional regulatory family. Homodimer.

Functionally, controls the transcription of genes involved in arginine and lysine metabolism. This is HTH-type transcriptional regulator ArgP from Escherichia fergusonii (strain ATCC 35469 / DSM 13698 / CCUG 18766 / IAM 14443 / JCM 21226 / LMG 7866 / NBRC 102419 / NCTC 12128 / CDC 0568-73).